A 400-amino-acid chain; its full sequence is Polyadenylate-binding protein-interacting protein 1 (400 aa).

Over residues 1–10 (MSDSFDRAPE) the composition is skewed to basic and acidic residues. Positions 1-36 (MSDSFDRAPEQTKPQRAPPSSQDKIPQQNSESAMAK) are disordered. Residues 12 to 32 (TKPQRAPPSSQDKIPQQNSES) are compositionally biased toward polar residues. The tract at residues 37 to 64 (PQVVVAPVLMSKLSANAPEFYPSGYSSN) is PABPC1-interacting motif-2 (PAM2). Residues 78–296 (TLSEYVQDFL…LLKLVELRSS (219 aa)) are PAIP1 middle domain (PAIP1M). An MIF4G domain is found at 80–297 (SEYVQDFLNH…LKLVELRSSN (218 aa)). The disordered stretch occupies residues 356–376 (DYEENGTDLSGAGDPYLDDID). The segment at 361–400 (GTDLSGAGDPYLDDIDDEMDPEIEEAYEKFCLESERKRKQ) is PABPC1-interacting motif-1 (PAM1).

In terms of assembly, interacts with the RRM1-RRM2 and C-terminus regions of PABPC1 in a 1:1 stoichiometry. Interacts with EIF4A.

It is found in the cytoplasm. Functionally, acts as a coactivator in the regulation of translation initiation of poly(A)-containing mRNAs. Its stimulatory activity on translation is mediated via its action on PABPC1. Competes with PAIP2 for binding to PABPC1. Its association with EIF4A and PABPC1 may potentiate contacts between mRNA termini. May also be involved in translationally coupled mRNA turnover. Implicated with other RNA-binding proteins in the cytoplasmic deadenylation/translational and decay interplay of the FOS mRNA mediated by the major coding-region determinant of instability (mCRD) domain. The chain is Polyadenylate-binding protein-interacting protein 1 (Paip1) from Mus musculus (Mouse).